Consider the following 151-residue polypeptide: uncharacterized protein (151 aa).

The interval 1-24 (MHAKTKKLGTDTSYKRPQVTAQEQ) is disordered.

This is an uncharacterized protein from Acanthamoeba polyphaga mimivirus (APMV).